The sequence spans 199 residues: Probable thymidylate kinase (199 aa).

9 to 16 (GIDGCGKT) provides a ligand contact to ATP.

It belongs to the thymidylate kinase family.

It catalyses the reaction dTMP + ATP = dTDP + ADP. The protein is Probable thymidylate kinase of Methanococcus maripaludis (strain C7 / ATCC BAA-1331).